Reading from the N-terminus, the 333-residue chain is 6-phosphogluconolactonase (333 aa).

This sequence belongs to the cycloisomerase 2 family.

It catalyses the reaction 6-phospho-D-glucono-1,5-lactone + H2O = 6-phospho-D-gluconate + H(+). The protein operates within carbohydrate degradation; pentose phosphate pathway; D-ribulose 5-phosphate from D-glucose 6-phosphate (oxidative stage): step 2/3. Catalyzes the hydrolysis of 6-phosphogluconolactone to 6-phosphogluconate. In Cronobacter sakazakii (strain ATCC BAA-894) (Enterobacter sakazakii), this protein is 6-phosphogluconolactonase.